A 505-amino-acid chain; its full sequence is Glycerol kinase (505 aa).

Residue threonine 15 coordinates ADP. ATP contacts are provided by threonine 15, threonine 16, and serine 17. Sn-glycerol 3-phosphate is bound at residue threonine 15. Arginine 19 contributes to the ADP binding site. Positions 85, 86, 136, and 249 each coordinate sn-glycerol 3-phosphate. The glycerol site is built by arginine 85, glutamate 86, tyrosine 136, aspartate 249, and glutamine 250. The ADP site is built by threonine 271 and glycine 314. 4 residues coordinate ATP: threonine 271, glycine 314, glutamine 318, and glycine 415. ADP contacts are provided by glycine 415 and asparagine 419.

Belongs to the FGGY kinase family.

The catalysed reaction is glycerol + ATP = sn-glycerol 3-phosphate + ADP + H(+). The protein operates within polyol metabolism; glycerol degradation via glycerol kinase pathway; sn-glycerol 3-phosphate from glycerol: step 1/1. Inhibited by fructose 1,6-bisphosphate (FBP). Its function is as follows. Key enzyme in the regulation of glycerol uptake and metabolism. Catalyzes the phosphorylation of glycerol to yield sn-glycerol 3-phosphate. The protein is Glycerol kinase of Mycoplasma mycoides subsp. mycoides SC (strain CCUG 32753 / NCTC 10114 / PG1).